A 440-amino-acid chain; its full sequence is Murein DD-endopeptidase MepM (440 aa).

The helical transmembrane segment at 21–40 (VMLGSLTVLTLAVAVWRPYV) threads the bilayer. The LysM domain occupies 96–141 (HEYVVSTGDTLSSILNQYGIDMGDITQLAAADKELRNLKIGQQLSW). H314 serves as a coordination point for Zn(2+).

Belongs to the peptidase M23B family. The cofactor is Zn(2+).

Its subcellular location is the cell membrane. The protein operates within cell wall biogenesis; cell wall polysaccharide biosynthesis. Its function is as follows. A murein DD-endopeptidase with specificity for D-Ala-meso-diaminopimelic acid (mDAP) cross-links. Its role is probably to cleave D-Ala-mDAP cross-links to allow insertion of new glycans and thus cell wall expansion. Functionally redundant with MepM and MepH. The protein is Murein DD-endopeptidase MepM (mepM) of Escherichia coli O6:H1 (strain CFT073 / ATCC 700928 / UPEC).